The following is a 61-amino-acid chain: Temporin-MT3 (61 aa).

The N-terminal stretch at 1 to 22 is a signal peptide; it reads MFTLKKPLLLLFFLGTINLSLC. Residues 23–44 constitute a propeptide, removed in mature form; it reads EQERNAEEERRDEPDERNAEVE. Leucine amide is present on Leu59.

It belongs to the frog skin active peptide (FSAP) family. Temporin subfamily. Expressed by the skin glands.

It localises to the secreted. In terms of biological role, antimicrobial peptide. The chain is Temporin-MT3 from Amolops mantzorum (Sichuan torrent frog).